A 486-amino-acid polypeptide reads, in one-letter code: Intermediate cleaving peptidase 55 (486 aa).

The N-terminal 19 residues, 1–19, are a transit peptide targeting the mitochondrion; sequence MSGYIRTLFIRNRFSNYRL. Mn(2+) contacts are provided by Asp-317, Asp-328, His-407, Glu-434, and Glu-457.

This sequence belongs to the peptidase M24B family. It depends on Mn(2+) as a cofactor.

It localises to the mitochondrion inner membrane. It catalyses the reaction The enzyme cleaves the 36-Pro-Pro-37 bond of cysteine desulfurase (EC 2.8.1.7) removing three amino acid residues (Tyr-Ser-Pro) from the N-terminus after cleavage by mitochondrial processing peptidase.. Its function is as follows. Aminopeptidase which cleaves preprotein intermediates that carry destabilizing N-ter amino acid residues after the mitochondrial processing peptidase (MPP) cleavage site and is thus critical for stabilization of the mitochondrial proteome. In Schizosaccharomyces pombe (strain 972 / ATCC 24843) (Fission yeast), this protein is Intermediate cleaving peptidase 55 (icp55).